The primary structure comprises 384 residues: Zinc transporter 7 (384 aa).

A signal peptide spans 1–25; the sequence is MERFVQFLRRGNGLMAASLAAGSCA. Over 26–46 the chain is Extracellular; the sequence is EEVAKAEGAGCRDDAAALRLK. A helical transmembrane segment spans residues 47–67; it reads GVAMATILVAGVVGVGLPLAG. Over 68 to 79 the chain is Cytoplasmic; that stretch reads RKRRALRTDSAA. A helical membrane pass occupies residues 80 to 100; it reads FVAAKAFAAGVILATGFVHML. The Extracellular portion of the chain corresponds to 101 to 119; it reads HDAEHALSSPCLPAHPWRS. The chain crosses the membrane as a helical span at residues 120–140; sequence FPFPGFVAMSAALATLVLDFL. The Cytoplasmic segment spans residues 141–227; sequence ATRFYEGKHR…GEGEVPAQVR (87 aa). Residues 185 to 222 form a disordered region; that stretch reads DNKAPLLQPHSHSHSHPHGHGHGHELAQPEGSGGEGEV. The segment covering 195–205 has biased composition (basic residues); it reads SHSHSHPHGHG. A helical transmembrane segment spans residues 228–248; that stretch reads SVVVSQILEMGIVSHSVIIGL. The Extracellular segment spans residues 249-261; it reads SLGVSRSPCTIRP. A helical transmembrane segment spans residues 262 to 282; the sequence is LVAALSFHQFFEGFALGGCIA. Residues 283 to 291 are Cytoplasmic-facing; it reads QAQFKTLSA. A helical transmembrane segment spans residues 292 to 312; it reads AIMACFFAITTPAGIAAGAGV. The Extracellular segment spans residues 313-323; it reads ASFYNANSPRA. The chain crosses the membrane as a helical span at residues 324-344; the sequence is LVVEGILDSVSAGILIYMSLV. The Cytoplasmic segment spans residues 345–363; the sequence is DLIAADFLGGKMTGSTRQQ. The helical transmembrane segment at 364–384 threads the bilayer; the sequence is VMAYIALFLGALSMSSLAIWA.

This sequence belongs to the ZIP transporter (TC 2.A.5) family.

Its subcellular location is the cell membrane. Zinc transporter that may be involved in zinc uptake from the rhizosphere. This chain is Zinc transporter 7 (ZIP7), found in Oryza sativa subsp. japonica (Rice).